The chain runs to 56 residues: Large ribosomal subunit protein bL32 (56 aa).

Residues 1 to 16 show a composition bias toward basic residues; sequence MAVQKNRKTRSKRGMR. Residues 1–28 form a disordered region; the sequence is MAVQKNRKTRSKRGMRRSHDALTTAALS.

It belongs to the bacterial ribosomal protein bL32 family.

The chain is Large ribosomal subunit protein bL32 from Vibrio campbellii (strain ATCC BAA-1116).